The chain runs to 130 residues: Small ribosomal subunit protein uS11 (130 aa).

This sequence belongs to the universal ribosomal protein uS11 family. As to quaternary structure, part of the 30S ribosomal subunit. Interacts with proteins S7 and S18. Binds to IF-3.

Located on the platform of the 30S subunit, it bridges several disparate RNA helices of the 16S rRNA. Forms part of the Shine-Dalgarno cleft in the 70S ribosome. The chain is Small ribosomal subunit protein uS11 from Teredinibacter turnerae (strain ATCC 39867 / T7901).